We begin with the raw amino-acid sequence, 537 residues long: Formimidoyltransferase-cyclodeaminase (537 aa).

A formiminotransferase N-subdomain region spans residues 1-181 (MNKLVECVPN…GASVTGARSF (181 aa)). Histidine 82 functions as the For formimidoyltransferase activity in the catalytic mechanism. 163–172 (GPAKFIPSYG) is a folate binding site. A formiminotransferase C-subdomain region spans residues 182 to 326 (LIAYNVNILG…PKKRIIDYMV (145 aa)). The linker stretch occupies residues 327-335 (QEDLKVTQP). The cyclodeaminase/cyclohydrolase stretch occupies residues 336 to 537 (LASMSVRGFV…VLEILSNRKE (202 aa)). The active-site For cyclodeaminase activity is the aspartate 413.

The protein in the C-terminal section; belongs to the cyclodeaminase/cyclohydrolase family. This sequence in the N-terminal section; belongs to the formiminotransferase family. Homooctamer, including four polyglutamate binding sites. The subunits are arranged as a tetramer of dimers, and form a planar ring-shaped structure.

Its subcellular location is the cytoplasm. The protein resides in the cytosol. It localises to the golgi apparatus. It is found in the cytoskeleton. The protein localises to the microtubule organizing center. Its subcellular location is the centrosome. The protein resides in the centriole. The enzyme catalyses 5-formimidoyltetrahydrofolate + L-glutamate = N-formimidoyl-L-glutamate + (6S)-5,6,7,8-tetrahydrofolate. The catalysed reaction is 5-formimidoyltetrahydrofolate + 2 H(+) = (6R)-5,10-methenyltetrahydrofolate + NH4(+). It participates in amino-acid degradation; L-histidine degradation into L-glutamate; L-glutamate from N-formimidoyl-L-glutamate (transferase route): step 1/1. Folate-dependent enzyme, that displays both transferase and deaminase activity. Serves to channel one-carbon units from formiminoglutamate to the folate pool. The polypeptide is Formimidoyltransferase-cyclodeaminase (ftcd) (Dictyostelium discoideum (Social amoeba)).